The sequence spans 324 residues: N-acetylmuramoyl-L-alanine amidase sle1 (324 aa).

Residues 1–25 (MQKKYITAIIGTTALSALASTHAQA) form the signal peptide. 3 LysM domains span residues 27 to 70 (TTHT…VLKV), 84 to 127 (TVYT…KLKV), and 147 to 190 (ATYT…KLKV). Positions 200 to 324 (SNNTRSNGGY…YQVRNYKFIH (125 aa)) constitute a Peptidase C51 domain.

It localises to the secreted. The protein resides in the cell surface. It catalyses the reaction Hydrolyzes the link between N-acetylmuramoyl residues and L-amino acid residues in certain cell-wall glycopeptides.. Its function is as follows. Peptidoglycan hydrolase involved in the splitting of the septum during cell division. The polypeptide is N-acetylmuramoyl-L-alanine amidase sle1 (sle1) (Staphylococcus epidermidis (strain ATCC 12228 / FDA PCI 1200)).